Consider the following 250-residue polypeptide: Triosephosphate isomerase (250 aa).

9-11 (NWK) lines the substrate pocket. H94 acts as the Electrophile in catalysis. The Proton acceptor role is filled by E165. Residues G171, S211, and 232–233 (GG) each bind substrate.

This sequence belongs to the triosephosphate isomerase family. Homodimer.

Its subcellular location is the cytoplasm. It catalyses the reaction D-glyceraldehyde 3-phosphate = dihydroxyacetone phosphate. It functions in the pathway carbohydrate biosynthesis; gluconeogenesis. Its pathway is carbohydrate degradation; glycolysis; D-glyceraldehyde 3-phosphate from glycerone phosphate: step 1/1. Its function is as follows. Involved in the gluconeogenesis. Catalyzes stereospecifically the conversion of dihydroxyacetone phosphate (DHAP) to D-glyceraldehyde-3-phosphate (G3P). This chain is Triosephosphate isomerase, found in Alkalilimnicola ehrlichii (strain ATCC BAA-1101 / DSM 17681 / MLHE-1).